The primary structure comprises 81 residues: Photosystem I iron-sulfur center (81 aa).

4Fe-4S ferredoxin-type domains follow at residues 2–31 (SHKIKIYDTCIGCTQCVRACPTDVLEMIPW) and 39–68 (IASAPRTEDCVGCKRCESACPTDFLSVRVY). Residues Cys11, Cys14, Cys17, Cys21, Cys48, Cys51, Cys54, and Cys58 each coordinate [4Fe-4S] cluster.

In terms of assembly, the eukaryotic PSI reaction center is composed of at least 11 subunits. [4Fe-4S] cluster is required as a cofactor.

Its subcellular location is the plastid. The protein localises to the chloroplast thylakoid membrane. It carries out the reaction reduced [plastocyanin] + hnu + oxidized [2Fe-2S]-[ferredoxin] = oxidized [plastocyanin] + reduced [2Fe-2S]-[ferredoxin]. Its function is as follows. Apoprotein for the two 4Fe-4S centers FA and FB of photosystem I (PSI); essential for photochemical activity. FB is the terminal electron acceptor of PSI, donating electrons to ferredoxin. The C-terminus interacts with PsaA/B/D and helps assemble the protein into the PSI complex. Required for binding of PsaD and PsaE to PSI. PSI is a plastocyanin-ferredoxin oxidoreductase, converting photonic excitation into a charge separation, which transfers an electron from the donor P700 chlorophyll pair to the spectroscopically characterized acceptors A0, A1, FX, FA and FB in turn. This Chara vulgaris (Common stonewort) protein is Photosystem I iron-sulfur center.